Consider the following 199-residue polypeptide: Adenylate kinase (199 aa).

G8–T13 serves as a coordination point for ATP. Residues S28–V57 form an NMP region. AMP is bound by residues T29, R34, D55 to V57, G83 to R86, and Q90. The interval K124–D134 is LID. R125 is an ATP binding site. Residues R131 and R142 each contribute to the AMP site. G170 is an ATP binding site.

Belongs to the adenylate kinase family. Monomer.

The protein localises to the cytoplasm. The enzyme catalyses AMP + ATP = 2 ADP. The protein operates within purine metabolism; AMP biosynthesis via salvage pathway; AMP from ADP: step 1/1. Catalyzes the reversible transfer of the terminal phosphate group between ATP and AMP. Plays an important role in cellular energy homeostasis and in adenine nucleotide metabolism. The polypeptide is Adenylate kinase (Leifsonia xyli subsp. xyli (strain CTCB07)).